Reading from the N-terminus, the 273-residue chain is Formamidopyrimidine-DNA glycosylase (273 aa).

P2 functions as the Schiff-base intermediate with DNA in the catalytic mechanism. The active-site Proton donor is E3. K59 (proton donor; for beta-elimination activity) is an active-site residue. Residues H92 and R111 each contribute to the DNA site. The FPG-type zinc-finger motif lies at 239–273 (KVYGKTGEPCVICGTPIEKIKLNGRGTHFCPHCQK). The Proton donor; for delta-elimination activity role is filled by R263.

The protein belongs to the FPG family. Monomer. Zn(2+) serves as cofactor.

It carries out the reaction Hydrolysis of DNA containing ring-opened 7-methylguanine residues, releasing 2,6-diamino-4-hydroxy-5-(N-methyl)formamidopyrimidine.. The enzyme catalyses 2'-deoxyribonucleotide-(2'-deoxyribose 5'-phosphate)-2'-deoxyribonucleotide-DNA = a 3'-end 2'-deoxyribonucleotide-(2,3-dehydro-2,3-deoxyribose 5'-phosphate)-DNA + a 5'-end 5'-phospho-2'-deoxyribonucleoside-DNA + H(+). In terms of biological role, involved in base excision repair of DNA damaged by oxidation or by mutagenic agents. Acts as a DNA glycosylase that recognizes and removes damaged bases. Has a preference for oxidized purines, such as 7,8-dihydro-8-oxoguanine (8-oxoG). Has AP (apurinic/apyrimidinic) lyase activity and introduces nicks in the DNA strand. Cleaves the DNA backbone by beta-delta elimination to generate a single-strand break at the site of the removed base with both 3'- and 5'-phosphates. This is Formamidopyrimidine-DNA glycosylase from Listeria innocua serovar 6a (strain ATCC BAA-680 / CLIP 11262).